The following is a 500-amino-acid chain: ATP synthase subunit alpha (500 aa).

168-175 (GDRQTGKT) serves as a coordination point for ATP.

It belongs to the ATPase alpha/beta chains family. In terms of assembly, F-type ATPases have 2 components, CF(1) - the catalytic core - and CF(0) - the membrane proton channel. CF(1) has five subunits: alpha(3), beta(3), gamma(1), delta(1), epsilon(1). CF(0) has three main subunits: a(1), b(2) and c(9-12). The alpha and beta chains form an alternating ring which encloses part of the gamma chain. CF(1) is attached to CF(0) by a central stalk formed by the gamma and epsilon chains, while a peripheral stalk is formed by the delta and b chains.

It is found in the cell membrane. It catalyses the reaction ATP + H2O + 4 H(+)(in) = ADP + phosphate + 5 H(+)(out). Produces ATP from ADP in the presence of a proton gradient across the membrane. The alpha chain is a regulatory subunit. This chain is ATP synthase subunit alpha, found in Streptococcus suis (strain 98HAH33).